The sequence spans 149 residues: SsrA-binding protein (149 aa).

Belongs to the SmpB family.

The protein resides in the cytoplasm. Required for rescue of stalled ribosomes mediated by trans-translation. Binds to transfer-messenger RNA (tmRNA), required for stable association of tmRNA with ribosomes. tmRNA and SmpB together mimic tRNA shape, replacing the anticodon stem-loop with SmpB. tmRNA is encoded by the ssrA gene; the 2 termini fold to resemble tRNA(Ala) and it encodes a 'tag peptide', a short internal open reading frame. During trans-translation Ala-aminoacylated tmRNA acts like a tRNA, entering the A-site of stalled ribosomes, displacing the stalled mRNA. The ribosome then switches to translate the ORF on the tmRNA; the nascent peptide is terminated with the 'tag peptide' encoded by the tmRNA and targeted for degradation. The ribosome is freed to recommence translation, which seems to be the essential function of trans-translation. In Wolbachia pipientis wMel, this protein is SsrA-binding protein.